Consider the following 400-residue polypeptide: 3-phenylpropionate/cinnamic acid dioxygenase ferredoxin--NAD(+) reductase component (400 aa).

Thr-5 to Asp-36 lines the FAD pocket. An NAD(+)-binding site is contributed by Ser-146 to Glu-174.

The protein belongs to the bacterial ring-hydroxylating dioxygenase ferredoxin reductase family. This dioxygenase system consists of four proteins: the two subunits of the hydroxylase component (HcaE and HcaF), a ferredoxin (HcaC) and a ferredoxin reductase (HcaD). FAD serves as cofactor.

The catalysed reaction is 2 reduced [2Fe-2S]-[ferredoxin] + NAD(+) + H(+) = 2 oxidized [2Fe-2S]-[ferredoxin] + NADH. The protein operates within aromatic compound metabolism; 3-phenylpropanoate degradation. Its function is as follows. Part of the multicomponent 3-phenylpropionate dioxygenase, that converts 3-phenylpropionic acid (PP) and cinnamic acid (CI) into 3-phenylpropionate-dihydrodiol (PP-dihydrodiol) and cinnamic acid-dihydrodiol (CI-dihydrodiol), respectively. In Escherichia coli (strain K12 / MC4100 / BW2952), this protein is 3-phenylpropionate/cinnamic acid dioxygenase ferredoxin--NAD(+) reductase component.